Here is a 175-residue protein sequence, read N- to C-terminus: NADH dehydrogenase [ubiquinone] 1 alpha subcomplex assembly factor 4 (175 aa).

The N-myristoyl glycine moiety is linked to residue Gly2. Ser35 bears the Phosphoserine mark.

Belongs to the NDUFAF4 family. As to quaternary structure, binds calmodulin. Interacts with NDUFAF3. (Microbial infection) Interacts with the vesicular stomatitis virus matrix protein/M; the interaction inhibits viral propagation. In terms of processing, phosphorylated on serine. Prolactin stimulate serine phosphorylation.

Its subcellular location is the mitochondrion. It is found in the membrane. Involved in the assembly of mitochondrial NADH:ubiquinone oxidoreductase complex (complex I). May be involved in cell proliferation and survival of hormone-dependent tumor cells. May be a regulator of breast tumor cell invasion. This is NADH dehydrogenase [ubiquinone] 1 alpha subcomplex assembly factor 4 from Homo sapiens (Human).